The sequence spans 449 residues: Lipase (449 aa).

The N-terminal stretch at 1–23 (MGVFDYKNLGTEASKTLFADATA) is a signal peptide. A disordered region spans residues 58–77 (RQHRLPGSDPPAFPGILTRK). The Charge relay system role is filled by S206. Ca(2+) contacts are provided by G318, D387, and D396. 2 Hemolysin-type calcium-binding repeats span residues 372-389 (IGSD…ADFI) and 390-407 (EGGK…HNTF).

The protein belongs to the AB hydrolase superfamily. Lipase family.

It catalyses the reaction a triacylglycerol + H2O = a diacylglycerol + a fatty acid + H(+). The polypeptide is Lipase (Pseudomonas fluorescens).